The chain runs to 312 residues: Epoxyqueuosine reductase (312 aa).

The active-site Proton donor is Asp-132. Residues 174-206 (EVLEADKPSKPICGECEKCIEACPTKAIEEPFI) form the 4Fe-4S ferredoxin-type 1 domain. Residues Cys-186, Cys-189, Cys-192, Cys-196, Cys-212, Cys-240, Cys-243, and Cys-247 each coordinate [4Fe-4S] cluster. Positions 226–257 (PENIINKMGNWIAGCDICQDVCPWNQKHIPST) constitute a 4Fe-4S ferredoxin-type 2 domain.

Belongs to the QueG family. As to quaternary structure, monomer. Cob(II)alamin serves as cofactor. [4Fe-4S] cluster is required as a cofactor.

It is found in the cytoplasm. It carries out the reaction epoxyqueuosine(34) in tRNA + AH2 = queuosine(34) in tRNA + A + H2O. The protein operates within tRNA modification; tRNA-queuosine biosynthesis. Its function is as follows. Catalyzes the conversion of epoxyqueuosine (oQ) to queuosine (Q), which is a hypermodified base found in the wobble positions of tRNA(Asp), tRNA(Asn), tRNA(His) and tRNA(Tyr). This Prochlorococcus marinus (strain NATL2A) protein is Epoxyqueuosine reductase.